We begin with the raw amino-acid sequence, 230 residues long: Sugar fermentation stimulation protein homolog (230 aa).

It belongs to the SfsA family.

The protein is Sugar fermentation stimulation protein homolog of Clostridium botulinum (strain Loch Maree / Type A3).